We begin with the raw amino-acid sequence, 1358 residues long: DNA-directed RNA polymerase subunit beta (1358 aa).

It belongs to the RNA polymerase beta chain family. In terms of assembly, the RNAP catalytic core consists of 2 alpha, 1 beta, 1 beta' and 1 omega subunit. When a sigma factor is associated with the core the holoenzyme is formed, which can initiate transcription.

It catalyses the reaction RNA(n) + a ribonucleoside 5'-triphosphate = RNA(n+1) + diphosphate. Functionally, DNA-dependent RNA polymerase catalyzes the transcription of DNA into RNA using the four ribonucleoside triphosphates as substrates. This chain is DNA-directed RNA polymerase subunit beta, found in Francisella philomiragia subsp. philomiragia (strain ATCC 25017 / CCUG 19701 / FSC 153 / O#319-036).